A 577-amino-acid polypeptide reads, in one-letter code: Protein CBFA2T1 (577 aa).

Over residues 1 to 10 the composition is skewed to basic and acidic residues; it reads MPDRTEKHST. The disordered stretch occupies residues 1–87; that stretch reads MPDRTEKHST…SSSSLANQQL (87 aa). S14 is modified (phosphoserine). A compositionally biased stretch (polar residues) spans 42–59; sequence SSFTPTTLTNGTSHSPTA. Over residues 68–87 the composition is skewed to low complexity; that stretch reads NGFSNGPSSSSSSSLANQQL. A TAFH domain is found at 93 to 188; the sequence is ARQLSKLKRF…NPAQYLAQHE (96 aa). Positions 203–271 are disordered; sequence SELLLDVNEN…LPHPTPPPPQ (69 aa). Residues 211 to 237 are compositionally biased toward basic and acidic residues; sequence ENGKRRTPDRTKENGFDREPLHSEHPS. Residues 244–258 are compositionally biased toward polar residues; the sequence is SPGQRYSPNNGLSYQ. Positions 262–271 are enriched in pro residues; sequence LPHPTPPPPQ. The important for oligomerization stretch occupies residues 310–356; sequence QEEMIDHRLTDREWAEEWKHLDHLLNCIMDMVEKTRRSLTVLRRCQE. The segment at 310–356 is nervy homology region 2 (NHR2); that stretch reads QEEMIDHRLTDREWAEEWKHLDHLLNCIMDMVEKTRRSLTVLRRCQE. The tract at residues 374-396 is disordered; it reads DLKKGGSSSSSHSRQQSPVNPDP. Positions 380 to 390 are enriched in low complexity; the sequence is SSSSSHSRQQS. Position 390 is a phosphoserine (S390). Positions 416 to 465 are nervy homology region 3 (NHR3); it reads EEIWKKAEEAVNEVKRQAMTELQKAVSEAERKAHDMITTERAKMERTVAE. Residues C488, C491, C499, C502, C508, C512, H520, and C524 each coordinate Zn(2+). The segment at 488–524 adopts an MYND-type zinc-finger fold; sequence CWNCGRKASETCSGCNTARYCGSFCQHKDWEKHHHIC. The interval 529–577 is disordered; the sequence is QAPQQGDTPAVSSSVTPSSGAGSPMDTPPAATPRSTTPGTPSTIETTPR. Composition is skewed to low complexity over residues 536-553 and 560-577; these read TPAVSSSVTPSSGAGSPM and TPRSTTPGTPSTIETTPR.

This sequence belongs to the CBFA2T family. In terms of assembly, homotetramer. Heterotetramer with CBFA2T2 and CBFA2T3. Interacts with TCF12, SIN3A, HDAC1, HDAC2, HDAC3, NCOR1 and NCOR2. Interacts with ATN1 (via its N-terminus); the interaction enhances the transcriptional repression.

The protein localises to the nucleus. Transcriptional corepressor which facilitates transcriptional repression via its association with DNA-binding transcription factors and recruitment of other corepressors and histone-modifying enzymes. Can repress the expression of MMP7 in a ZBTB33-dependent manner. Can repress transactivation mediated by TCF12. Acts as a negative regulator of adipogenesis. The chain is Protein CBFA2T1 (Runx1t1) from Mus musculus (Mouse).